Reading from the N-terminus, the 211-residue chain is Holliday junction branch migration complex subunit RuvA (211 aa).

Residues 1–64 (MIGRLRGMLV…EDAQLLYGFA (64 aa)) are domain I. Residues 65-143 (NKVERKLFRL…DWQAQQIHLV (79 aa)) are domain II. The segment at 144–162 (SDDGVIPEQLSAELSQETT) is flexible linker. Residues 163–211 (FVNDNKGDAINALLSLGYKQVQADKAVKSVYNRGMSSENIIRDALKSMI) form a domain III region.

The protein belongs to the RuvA family. Homotetramer. Forms an RuvA(8)-RuvB(12)-Holliday junction (HJ) complex. HJ DNA is sandwiched between 2 RuvA tetramers; dsDNA enters through RuvA and exits via RuvB. An RuvB hexamer assembles on each DNA strand where it exits the tetramer. Each RuvB hexamer is contacted by two RuvA subunits (via domain III) on 2 adjacent RuvB subunits; this complex drives branch migration. In the full resolvosome a probable DNA-RuvA(4)-RuvB(12)-RuvC(2) complex forms which resolves the HJ.

Its subcellular location is the cytoplasm. Its function is as follows. The RuvA-RuvB-RuvC complex processes Holliday junction (HJ) DNA during genetic recombination and DNA repair, while the RuvA-RuvB complex plays an important role in the rescue of blocked DNA replication forks via replication fork reversal (RFR). RuvA specifically binds to HJ cruciform DNA, conferring on it an open structure. The RuvB hexamer acts as an ATP-dependent pump, pulling dsDNA into and through the RuvAB complex. HJ branch migration allows RuvC to scan DNA until it finds its consensus sequence, where it cleaves and resolves the cruciform DNA. This chain is Holliday junction branch migration complex subunit RuvA, found in Colwellia psychrerythraea (strain 34H / ATCC BAA-681) (Vibrio psychroerythus).